Reading from the N-terminus, the 240-residue chain is Ion-translocating oxidoreductase complex subunit E (240 aa).

Transmembrane regions (helical) follow at residues 41–61, 71–91, 95–115, 130–150, and 184–204; these read LGLGLATMLVLACSNAAVSLV, LPAFVMIIAVLTTCIELLMQA, ELYQVLGIFIPLITTNCVILG, SFDGLLMGLGFALVLLVLGGL, and GFLLAILPPGAFIMLGLLIAL.

This sequence belongs to the NqrDE/RnfAE family. As to quaternary structure, the complex is composed of six subunits: RnfA, RnfB, RnfC, RnfD, RnfE and RnfG.

Its subcellular location is the cell inner membrane. Its function is as follows. Part of a membrane-bound complex that couples electron transfer with translocation of ions across the membrane. This chain is Ion-translocating oxidoreductase complex subunit E, found in Pseudomonas aeruginosa (strain ATCC 15692 / DSM 22644 / CIP 104116 / JCM 14847 / LMG 12228 / 1C / PRS 101 / PAO1).